The sequence spans 75 residues: Sec-independent protein translocase protein TatA (75 aa).

Residues 1-21 (MGSFSIWHWLIVLVIVLLVFG) traverse the membrane as a helical segment. Positions 41–75 (KGMHDDDKPAGKLGDDSRSAEQAREAQAERDRDAR) are disordered.

It belongs to the TatA/E family. As to quaternary structure, the Tat system comprises two distinct complexes: a TatABC complex, containing multiple copies of TatA, TatB and TatC subunits, and a separate TatA complex, containing only TatA subunits. Substrates initially bind to the TatABC complex, which probably triggers association of the separate TatA complex to form the active translocon.

The protein resides in the cell inner membrane. Functionally, part of the twin-arginine translocation (Tat) system that transports large folded proteins containing a characteristic twin-arginine motif in their signal peptide across membranes. TatA could form the protein-conducting channel of the Tat system. The protein is Sec-independent protein translocase protein TatA of Xanthomonas campestris pv. campestris (strain 8004).